The following is a 418-amino-acid chain: Phosphatidylcholine:ceramide cholinephosphotransferase 1 (418 aa).

The SAM domain occupies 12–75 (WSPKKVADWL…LDMIETLKME (64 aa)). Serine 13 bears the Phosphoserine mark. Transmembrane regions (helical) follow at residues 141-161 (FLAFLYALSCFVLTTVMISVV), 189-209 (FSICEINGMILVGLWLIQWLL), 220-240 (FFCIVGTLYLYRCITMYVTTL), 281-301 (MCGDYLYSGHTVMLTLTYLFI), and 309-329 (LWWYHWICWLLSVVGIFCILL). Residue histidine 290 is part of the active site. Catalysis depends on residues histidine 333 and aspartate 337. The chain crosses the membrane as a helical span at residues 335 to 352 (TVDVVVAYYITTRLFWWY).

The protein belongs to the sphingomyelin synthase family. In terms of tissue distribution, widely expressed. Highest expression in the cardiovascular system.

Its subcellular location is the golgi apparatus membrane. The catalysed reaction is an N-acylsphing-4-enine + a 1,2-diacyl-sn-glycero-3-phosphocholine = a sphingomyelin + a 1,2-diacyl-sn-glycerol. The enzyme catalyses 1-(9Z-octadecenoyl)-2-acyl-sn-3-glycerol + a sphingomyelin = a 1-(9Z-octadecenoyl)-2-acyl-sn-glycero-3-phosphocholine + an N-acylsphing-4-enine. It catalyses the reaction N-hexadecanoylsphinganine + a 1,2-diacyl-sn-glycero-3-phosphocholine = N-hexadecanoyl-sphinganine-1-phosphocholine + a 1,2-diacyl-sn-glycerol. It carries out the reaction N-hexadecanoyl-(4R)-hydroxysphinganine + a 1,2-diacyl-sn-glycero-3-phosphocholine = N-hexadecanoyl-(4R)-hydroxysphinganine-phosphocholine + a 1,2-diacyl-sn-glycerol. The catalysed reaction is an N-acylsphing-4-enine + a 1,2-diacyl-sn-glycero-3-phosphoethanolamine = an N-acylsphing-4-enine 1-phosphoethanolamine + a 1,2-diacyl-sn-glycerol. Its pathway is sphingolipid metabolism. Major sphingomyelin synthase at the Golgi apparatus. Catalyzes the reversible transfer of phosphocholine moiety in sphingomyelin biosynthesis: in the forward reaction transfers phosphocholine head group of phosphatidylcholine (PC) on to ceramide (CER) to form ceramide phosphocholine (sphingomyelin, SM) and diacylglycerol (DAG) as by-product, and in the reverse reaction transfers phosphocholine from SM to DAG to form PC and CER. The direction of the reaction depends on the levels of CER and DAG in Golgi membranes. Converts the newly synthesized CER, that is transported from the endoplasmic reticulum to the trans-Golgi by the Cer transport protein (CERT), to SM. Can form a heteromeric complex with glucosylceramide synthase (GCS) increasing SMS activity and reducing glucosylceramide synthesis, a critical mechanism that controls the metabolic fate of CER in the Golgi. Does not use free phosphorylcholine or CDP-choline as donor. Can also transfer phosphoethanolamine head group of phosphatidylethanolamine (PE) on to CER to form ceramide phosphoethanolamine (CPE). Regulates receptor-mediated signal transduction via mitogenic DAG and proapoptotic CER, as well as via SM, a structural component of membrane rafts that serve as platforms for signal transduction and protein sorting. Plays a role in secretory transport via regulation of DAG pool at the Golgi apparatus and its downstream effects on PRKD1. This is Phosphatidylcholine:ceramide cholinephosphotransferase 1 (SGMS1) from Sus scrofa (Pig).